Here is a 145-residue protein sequence, read N- to C-terminus: Ponticulin-like protein B (145 aa).

The N-terminal stretch at 1-22 (MLFIKSLLLLLSLIFAVSNATG) is a signal peptide. N34 carries an N-linked (GlcNAc...) asparagine glycan. The tract at residues 107 to 126 (DTTSSSTSPSSTSPSSTSPA) is disordered. A compositionally biased stretch (low complexity) spans 108 to 126 (TTSSSTSPSSTSPSSTSPA). A lipid anchor (GPI-like-anchor amidated serine) is attached at S117. A propeptide spans 118–145 (TSPSSTSPASTLIGSIAFVTLAALFALI) (removed in mature form).

This sequence belongs to the ponticulin family. In terms of processing, the GPI-like-anchor contains a phosphoceramide group, rather than a phosphatidyl group.

The protein localises to the cell membrane. In terms of biological role, binds F-actin and nucleates actin assembly. This chain is Ponticulin-like protein B (ponB), found in Dictyostelium discoideum (Social amoeba).